The sequence spans 225 residues: Enolase-phosphatase E1 (225 aa).

This sequence belongs to the HAD-like hydrolase superfamily. MasA/MtnC family. In terms of assembly, monomer. Mg(2+) serves as cofactor.

It carries out the reaction 5-methylsulfanyl-2,3-dioxopentyl phosphate + H2O = 1,2-dihydroxy-5-(methylsulfanyl)pent-1-en-3-one + phosphate. Its pathway is amino-acid biosynthesis; L-methionine biosynthesis via salvage pathway; L-methionine from S-methyl-5-thio-alpha-D-ribose 1-phosphate: step 3/6. It participates in amino-acid biosynthesis; L-methionine biosynthesis via salvage pathway; L-methionine from S-methyl-5-thio-alpha-D-ribose 1-phosphate: step 4/6. Functionally, bifunctional enzyme that catalyzes the enolization of 2,3-diketo-5-methylthiopentyl-1-phosphate (DK-MTP-1-P) into the intermediate 2-hydroxy-3-keto-5-methylthiopentenyl-1-phosphate (HK-MTPenyl-1-P), which is then dephosphorylated to form the acireductone 1,2-dihydroxy-3-keto-5-methylthiopentene (DHK-MTPene). This is Enolase-phosphatase E1 from Shewanella woodyi (strain ATCC 51908 / MS32).